The sequence spans 326 residues: MSLTAAVKDELARVRVDKISSRKAEVSATLRFAGGLHIISGRIVIEAELDAAIAARRLRVAIAEVYGHVSDIIVVSGGALRKGNRYVVRVVRDGEALARQTGLLDSRGRPVRGLPPQVVSASIGDTVAAWRGAFLAHGSLTEPGRSSALEVTCPGPEAALALVGAARRLGITSKAREVRGVDRVVIRDGDAISAILTRMGAHDAVLAWEERRMRREVRGTANRLANFDDANLRRSARAAVAASARVERAFEILAEDVPDHLVEAGRLRLENKQASLEELGQLSDPPLTKDAVAGRIRRLLAMADKKASDLGIPDTESILTPEMLDL.

The H-T-H motif DNA-binding region spans 275–308; sequence SLEELGQLSDPPLTKDAVAGRIRRLLAMADKKAS.

The protein belongs to the WhiA family.

Involved in cell division and chromosome segregation. This chain is Probable cell division protein WhiA, found in Beutenbergia cavernae (strain ATCC BAA-8 / DSM 12333 / CCUG 43141 / JCM 11478 / NBRC 16432 / NCIMB 13614 / HKI 0122).